We begin with the raw amino-acid sequence, 177 residues long: Bifunctional protein PyrR (177 aa).

The PRPP-binding motif lies at 99–111 (LVLIDDVIYKGRT).

The protein belongs to the purine/pyrimidine phosphoribosyltransferase family. PyrR subfamily.

It catalyses the reaction UMP + diphosphate = 5-phospho-alpha-D-ribose 1-diphosphate + uracil. Its function is as follows. Regulates the transcription of the pyrimidine nucleotide (pyr) operon in response to exogenous pyrimidines. Also displays a weak uracil phosphoribosyltransferase activity which is not physiologically significant. The chain is Bifunctional protein PyrR from Picosynechococcus sp. (strain ATCC 27264 / PCC 7002 / PR-6) (Agmenellum quadruplicatum).